Here is an 88-residue protein sequence, read N- to C-terminus: MANTAQARKRARQNTKRRQNSASQRSMVRTYLKRVDAAIAAKDYDAATEAYKKAVPVLDRMADKGILHKNKAARRKSRLNKTIKGLQA.

The tract at residues 1–26 (MANTAQARKRARQNTKRRQNSASQRS) is disordered. A compositionally biased stretch (basic residues) spans 7-19 (ARKRARQNTKRRQ).

This sequence belongs to the bacterial ribosomal protein bS20 family.

Binds directly to 16S ribosomal RNA. This Psychrobacter arcticus (strain DSM 17307 / VKM B-2377 / 273-4) protein is Small ribosomal subunit protein bS20.